Reading from the N-terminus, the 327-residue chain is GMP reductase (327 aa).

Catalysis depends on cysteine 176, which acts as the Thioimidate intermediate. 205 to 228 (IIADGGIRTHGDIAKSIRFGATMV) provides a ligand contact to NADP(+).

Belongs to the IMPDH/GMPR family. GuaC type 2 subfamily.

It catalyses the reaction IMP + NH4(+) + NADP(+) = GMP + NADPH + 2 H(+). Its function is as follows. Catalyzes the irreversible NADPH-dependent deamination of GMP to IMP. It functions in the conversion of nucleobase, nucleoside and nucleotide derivatives of G to A nucleotides, and in maintaining the intracellular balance of A and G nucleotides. This Streptococcus equi subsp. zooepidemicus (strain H70) protein is GMP reductase.